The chain runs to 1452 residues: Arf-GAP with Rho-GAP domain, ANK repeat and PH domain-containing protein 1 (1452 aa).

Positions 6–70 (DAALSVAEWL…LAGLHRAHAP (65 aa)) constitute an SAM domain. Positions 81–90 (PVPMKRHIFR) are required for interaction with SH3KBP1. 2 disordered regions span residues 87–258 (HIFR…LPSR) and 271–304 (EGEELSGDDSEDDDDHAYEGIPNGGWPTSGLNPP). Composition is skewed to pro residues over residues 92–104 (PPVPVTPPEPPPT), 154–167 (SVPPVPPRTGPPYP), and 205–225 (PLQPPSPPPCPPVIPPKPPRL). 2 stretches are compositionally biased toward acidic residues: residues 228-239 (EFDDSDYDDVPE) and 271-286 (EGEELSGDDSEDDDDH). Residue S232 is modified to Phosphoserine. Y234 bears the Phosphotyrosine; by PTK6 mark. One can recognise a PH 1 domain in the interval 329–421 (PVIKAGWLDK…WMQALQQAVV (93 aa)). S430 bears the Phosphoserine mark. Residues 442–531 (QPDRAGSLEL…WLEAMQGAIA (90 aa)) enclose the PH 2 domain. Residue Y506 is modified to Phosphotyrosine. Residues 537 to 662 (SEVAERIWAA…RYHPLFGNQE (126 aa)) enclose the Arf-GAP domain. A C4-type zinc finger spans residues 552–575 (CADCGAAQPDWASINLCVVICKRC). The residue at position 740 (S740) is a Phosphoserine. One can recognise a PH 3 domain in the interval 745–852 (TVSHSGFLYK…WVKCIAKAFV (108 aa)). The region spanning 956–1141 (ASLGDTLSEQ…DLINHYVVVF (186 aa)) is the Rho-GAP domain. The Ras-associating domain maps to 1174-1263 (GDFICTVYLE…SHLVVKKYQS (90 aa)). The region spanning 1276–1398 (GDTKHGMMKF…WFATFLSVQH (123 aa)) is the PH 4 domain. A phosphoserine mark is found at S1430 and S1437.

As to quaternary structure, interacts with SH3KBP1/CIN85 (via SH3 domains). The interaction is independent of EGF and does not affect ARAP1 GTPase-activating activity but is involved in regulating ubiquitination and endocytic trafficking of EGFR. ARAP1 competes with E3 ubiquitin-protein ligase CBL for binding to SH3KBP1, preventing interaction of CBL with SH3KBP1; this is likely to regulate SH3KBP1-mediated internalization of EGFR. Interacts with TNFRSF10A. In terms of processing, phosphorylated by PTK6 following EGF stimulation which enhances EGFR signaling by delaying EGFR down-regulation; the interaction is mediated by the SH2 domain of PTK6. Phosphorylation promotes association with the Golgi apparatus and endosomes. As to expression, expressed in the retina where it is detected in Mueller glia (at protein level). Also detected in the retinal pigment epithelium (at protein level). Expressed in osteoclasts (at protein level).

It is found in the cytoplasm. Its subcellular location is the golgi apparatus. The protein resides in the trans-Golgi network. The protein localises to the golgi stack membrane. It localises to the cell membrane. It is found in the endosome. Its subcellular location is the multivesicular body. The protein resides in the cell projection. The protein localises to the ruffle. It localises to the podosome. It is found in the early endosome. In terms of biological role, phosphatidylinositol 3,4,5-trisphosphate-dependent GTPase-activating protein that modulates actin cytoskeleton remodeling by regulating ARF and RHO family members. Activated by phosphatidylinositol 3,4,5-trisphosphate (PtdIns(3,4,5)P3) binding and, to a lesser extent, by phosphatidylinositol 3,4-bisphosphate (PtdIns(3,4)P2) binding. Has a preference for ARF1 and ARF5. Positively regulates the ring size of circular dorsal ruffles and promotes macropinocytosis. Acts as a bridging factor in osteoclasts to control actin and membrane dynamics. Regulates the condensing of osteoclast podosomes into sealing zones which segregate the bone-facing membrane from other membrane domains and are required for osteoclast resorption activity. Also regulates recruitment of the AP-3 complex to endosomal membranes and trafficking of lysosomal membrane proteins to the ruffled membrane border of osteoclasts to modulate bone resorption. Regulates the endocytic trafficking of EGFR. Regulates the incorporation of CD63 and CD9 into multivesicular bodies. Required in the retinal pigment epithelium (RPE) for photoreceptor survival due to its role in promoting RPE phagocytosis. The chain is Arf-GAP with Rho-GAP domain, ANK repeat and PH domain-containing protein 1 from Mus musculus (Mouse).